A 344-amino-acid chain; its full sequence is RNA 3'-terminal phosphate cyclase (344 aa).

Residues Gln-102 and 284 to 288 each bind ATP; that span reads FLGDQ. His-308 functions as the Tele-AMP-histidine intermediate in the catalytic mechanism.

It belongs to the RNA 3'-terminal cyclase family. Type 1 subfamily.

The protein resides in the cytoplasm. It carries out the reaction a 3'-end 3'-phospho-ribonucleotide-RNA + ATP = a 3'-end 2',3'-cyclophospho-ribonucleotide-RNA + AMP + diphosphate. Functionally, catalyzes the conversion of 3'-phosphate to a 2',3'-cyclic phosphodiester at the end of RNA. The mechanism of action of the enzyme occurs in 3 steps: (A) adenylation of the enzyme by ATP; (B) transfer of adenylate to an RNA-N3'P to produce RNA-N3'PP5'A; (C) and attack of the adjacent 2'-hydroxyl on the 3'-phosphorus in the diester linkage to produce the cyclic end product. The biological role of this enzyme is unknown but it is likely to function in some aspects of cellular RNA processing. This chain is RNA 3'-terminal phosphate cyclase, found in Thermococcus gammatolerans (strain DSM 15229 / JCM 11827 / EJ3).